The primary structure comprises 352 residues: Holliday junction branch migration complex subunit RuvB (352 aa).

Residues 13–201 (LPLRKKELRL…FGISQKIEFY (189 aa)) form a large ATPase domain (RuvB-L) region. ATP contacts are provided by residues R41, G82, K85, T86, T87, 148–150 (EDF), R191, Y201, and R238. T86 contributes to the Mg(2+) binding site. Positions 202 to 273 (NYDELKQILL…LIKKALNSYQ (72 aa)) are small ATPAse domain (RuvB-S). The segment at 276–352 (DKGLDSLDRH…KYIDSKNDDF (77 aa)) is head domain (RuvB-H). Residues R330 and R335 each contribute to the DNA site.

Belongs to the RuvB family. In terms of assembly, homohexamer. Forms an RuvA(8)-RuvB(12)-Holliday junction (HJ) complex. HJ DNA is sandwiched between 2 RuvA tetramers; dsDNA enters through RuvA and exits via RuvB. An RuvB hexamer assembles on each DNA strand where it exits the tetramer. Each RuvB hexamer is contacted by two RuvA subunits (via domain III) on 2 adjacent RuvB subunits; this complex drives branch migration. In the full resolvosome a probable DNA-RuvA(4)-RuvB(12)-RuvC(2) complex forms which resolves the HJ.

It localises to the cytoplasm. It carries out the reaction ATP + H2O = ADP + phosphate + H(+). In terms of biological role, the RuvA-RuvB-RuvC complex processes Holliday junction (HJ) DNA during genetic recombination and DNA repair, while the RuvA-RuvB complex plays an important role in the rescue of blocked DNA replication forks via replication fork reversal (RFR). RuvA specifically binds to HJ cruciform DNA, conferring on it an open structure. The RuvB hexamer acts as an ATP-dependent pump, pulling dsDNA into and through the RuvAB complex. RuvB forms 2 homohexamers on either side of HJ DNA bound by 1 or 2 RuvA tetramers; 4 subunits per hexamer contact DNA at a time. Coordinated motions by a converter formed by DNA-disengaged RuvB subunits stimulates ATP hydrolysis and nucleotide exchange. Immobilization of the converter enables RuvB to convert the ATP-contained energy into a lever motion, pulling 2 nucleotides of DNA out of the RuvA tetramer per ATP hydrolyzed, thus driving DNA branch migration. The RuvB motors rotate together with the DNA substrate, which together with the progressing nucleotide cycle form the mechanistic basis for DNA recombination by continuous HJ branch migration. Branch migration allows RuvC to scan DNA until it finds its consensus sequence, where it cleaves and resolves cruciform DNA. The sequence is that of Holliday junction branch migration complex subunit RuvB from Prochlorococcus marinus (strain MIT 9301).